The primary structure comprises 479 residues: Siroheme synthase (479 aa).

The precorrin-2 dehydrogenase /sirohydrochlorin ferrochelatase stretch occupies residues 1–202; the sequence is MNYLPIFLDL…GRDSEAEAQL (202 aa). NAD(+)-binding positions include 22-23 and 43-44; these read ET and PA. The residue at position 128 (serine 128) is a Phosphoserine. The tract at residues 217–479 is uroporphyrinogen-III C-methyltransferase; the sequence is GEVYLVGAGP…TPLEAPDHLA (263 aa). Proline 226 is a binding site for S-adenosyl-L-methionine. Aspartate 249 acts as the Proton acceptor in catalysis. Residue lysine 271 is the Proton donor of the active site. Residues 302 to 304, isoleucine 307, 332 to 333, methionine 384, and glycine 413 each bind S-adenosyl-L-methionine; these read GGD and TA.

The protein in the N-terminal section; belongs to the precorrin-2 dehydrogenase / sirohydrochlorin ferrochelatase family. This sequence in the C-terminal section; belongs to the precorrin methyltransferase family.

It carries out the reaction uroporphyrinogen III + 2 S-adenosyl-L-methionine = precorrin-2 + 2 S-adenosyl-L-homocysteine + H(+). It catalyses the reaction precorrin-2 + NAD(+) = sirohydrochlorin + NADH + 2 H(+). The catalysed reaction is siroheme + 2 H(+) = sirohydrochlorin + Fe(2+). Its pathway is cofactor biosynthesis; adenosylcobalamin biosynthesis; precorrin-2 from uroporphyrinogen III: step 1/1. It functions in the pathway cofactor biosynthesis; adenosylcobalamin biosynthesis; sirohydrochlorin from precorrin-2: step 1/1. It participates in porphyrin-containing compound metabolism; siroheme biosynthesis; precorrin-2 from uroporphyrinogen III: step 1/1. The protein operates within porphyrin-containing compound metabolism; siroheme biosynthesis; siroheme from sirohydrochlorin: step 1/1. Its pathway is porphyrin-containing compound metabolism; siroheme biosynthesis; sirohydrochlorin from precorrin-2: step 1/1. In terms of biological role, multifunctional enzyme that catalyzes the SAM-dependent methylations of uroporphyrinogen III at position C-2 and C-7 to form precorrin-2 via precorrin-1. Then it catalyzes the NAD-dependent ring dehydrogenation of precorrin-2 to yield sirohydrochlorin. Finally, it catalyzes the ferrochelation of sirohydrochlorin to yield siroheme. The protein is Siroheme synthase of Thiobacillus denitrificans (strain ATCC 25259 / T1).